Here is a 727-residue protein sequence, read N- to C-terminus: Engulfment and cell motility protein 1 (727 aa).

Tyr18 bears the Phosphotyrosine; by HCK mark. Lys100 and Lys105 each carry N6-acetyllysine. Residue Tyr216 is modified to Phosphotyrosine; by HCK. Residues 319-492 (AQRDIIFELR…VVKEQVMRAL (174 aa)) form the ELMO domain. At Ser344 the chain carries Phosphoserine. Tyr395 and Tyr511 each carry phosphotyrosine; by HCK. The region spanning 555–676 (RLVEGTCFRK…DGLNALLGKD (122 aa)) is the PH domain. The SH3-binding motif lies at 707 to 714 (PDAPPPIP). At Tyr720 the chain carries Phosphotyrosine; by HCK.

In terms of assembly, interacts directly with the SH3-domain of DOCK1 via its SH3-binding site. Probably forms a heterotrimeric complex with DOCK1 and RAC1. Interacts with PLEKHG6. Interacts with HCK (via SH3 domain). Interacts with ADGRB1. Interacts with ADGRB3. Interacts with DOCK5. Phosphorylated by HCK.

It is found in the cytoplasm. The protein localises to the cell membrane. In terms of biological role, involved in cytoskeletal rearrangements required for phagocytosis of apoptotic cells and cell motility. Acts in association with DOCK1 and CRK. Was initially proposed to be required in complex with DOCK1 to activate Rac Rho small GTPases. May enhance the guanine nucleotide exchange factor (GEF) activity of DOCK1. This Mus musculus (Mouse) protein is Engulfment and cell motility protein 1 (Elmo1).